The sequence spans 367 residues: Protein P39 (367 aa).

2 coiled-coil regions span residues 165 to 202 (REGE…SKQQ) and 235 to 308 (EMIE…SDRL).

In terms of biological role, might be involved in virion assembly and vector-mediated transmission of the virus. This Peanut clump virus (isolate 87/TGTA2) (PCV) protein is Protein P39.